Consider the following 272-residue polypeptide: Aquaporin-11 (272 aa).

Residues 1 to 14 are Cytoplasmic-facing; it reads MTALRALWSEMQDT. A helical membrane pass occupies residues 15–35; the sequence is CTSLGLMLSVVLLAGLARVVA. The Lumenal portion of the chain corresponds to 36 to 47; sequence RQQQLHRPMAHA. A helical transmembrane segment spans residues 48 to 68; it reads FVLEFLATLQLCCCTHELLLL. Topologically, residues 69–75 are cytoplasmic; the sequence is SEQEPAH. The chain crosses the membrane as a helical span at residues 76-96; it reads PTWPLTLIYFFTLVHGLTLVG. The Lumenal segment spans residues 97 to 167; it reads TSSNPCGVMM…NPIQVDLPKA (71 aa). The short motif at 100–102 is the NPC element; the sequence is NPC. A helical membrane pass occupies residues 168-188; that stretch reads VIVEALCSFIFHSALLNFQEV. The Cytoplasmic segment spans residues 189–195; the sequence is RPKLRIH. Residues 196–216 traverse the membrane as a helical segment; the sequence is LLAALITFLVYAGGSLTGAVF. An NPA motif is present at residues 217–219; the sequence is NPA. Residues 217–235 are Lumenal-facing; that stretch reads NPALALSLHFKCFDEAFLQ. The chain crosses the membrane as a helical span at residues 236 to 256; it reads FFIVYWLAPSLGILLMILMFS. The Cytoplasmic segment spans residues 257 to 272; that stretch reads FFLPWLYNNHTINKKE.

Belongs to the MIP/aquaporin (TC 1.A.8) family. AQP11/AQP12 subfamily. In terms of assembly, homodimer; disulfide-linked. Homotetramer. Can also form homomultimer. Post-translationally, not glycosylated. Expressed in retina specifically at retinal Mueller glial cells.

Its subcellular location is the endoplasmic reticulum membrane. It is found in the cytoplasmic vesicle membrane. The protein resides in the cell membrane. It catalyses the reaction H2O(in) = H2O(out). The enzyme catalyses glycerol(in) = glycerol(out). It carries out the reaction H2O2(out) = H2O2(in). In terms of biological role, channel protein that facilitates the transport of water, glycerol and hydrogen peroxide across membrane of cell or organelles guaranteeing intracellular homeostasis in several organes like liver, kidney and brain. In situation of stress, participates in endoplasmic reticulum (ER) homeostasis by regulating redox homeostasis through the transport of hydrogen peroxide across the endoplasmic reticulum membrane thereby regulating the oxidative stress through the NADPH oxidase 2 pathway. Plays a role by maintaining an environment suitable for translation or protein foldings in the ER lumen namely by participating in the PKD1 glycosylation processing resulting in regulation of PKD1 membrane trafficking thereby preventing the accumulation of unfolding protein in ER. Plays a role in the proximal tubule function by regulating its endosomal acidification. May play a role in postnatal kidney development. This chain is Aquaporin-11, found in Equus caballus (Horse).